Here is an 82-residue protein sequence, read N- to C-terminus: Alpha-defensin 17 (82 aa).

A signal peptide spans 1-8; the sequence is LLAFQVQA. Positions 1 to 43 are disordered; that stretch reads LLAFQVQADPIQNTDEETKTEEQPGEEDQAVSVSFGDPEGTSL. Positions 9–47 are excised as a propeptide; the sequence is DPIQNTDEETKTEEQPGEEDQAVSVSFGDPEGTSLQEES. Cystine bridges form between Cys53-Cys81, Cys55-Cys70, and Cys60-Cys80.

It belongs to the alpha-defensin family.

Its subcellular location is the secreted. Functionally, probably contributes to the antimicrobial barrier function of the small bowel mucosa. This is Alpha-defensin 17 (Defa17) from Mus musculus (Mouse).